Here is a 436-residue protein sequence, read N- to C-terminus: Bystin (436 aa).

Residue Thr145 is modified to Phosphothreonine. Residues Ser148 and Ser152 each carry the phosphoserine modification.

It belongs to the bystin family.

Its subcellular location is the nucleus. The protein resides in the nucleolus. Functionally, required for processing of 20S pre-rRNA precursor and biogenesis of 40S ribosomal subunits. The chain is Bystin (bys) from Drosophila melanogaster (Fruit fly).